Here is a 430-residue protein sequence, read N- to C-terminus: Protein AST2 (430 aa).

Lipid raft-associated protein involved in the targeting of PMA1 from Golgi to the plasma membrane. May induce clustering of PMA1, which facilitates partition of PMA1 into lipid rafts after leaving the ER its and transport to the cell surface. This is Protein AST2 from Saccharomyces cerevisiae (strain ATCC 204508 / S288c) (Baker's yeast).